The sequence spans 573 residues: Flagellin B (573 aa).

It belongs to the bacterial flagellin family. As to quaternary structure, heteromer of FlaA and FlaB. A flagellar filament composed exclusively of FlaA is indistinguishable in length from that of the wild-type and shows a slight reduction in motility. The flagellar filament composed exclusively of the FlaB is severely truncated in length and greatly reduced in motility. Thus, while both flagellins are not necessary for motility, both are required for a fully active flagellar filament.

Its subcellular location is the secreted. It is found in the bacterial flagellum. Its function is as follows. Flagellin is the subunit protein which polymerizes to form the filaments of bacterial flagella. The chain is Flagellin B (flaB) from Campylobacter coli.